Reading from the N-terminus, the 76-residue chain is Vasotab-TY3 (76 aa).

The first 21 residues, 1–21, serve as a signal peptide directing secretion; that stretch reads MKFALFSVLVLMLIATFVAAD. A Kazal-like domain is found at 22-76; sequence DCPRICTSDYTPVCGTPSGGRRSANRTFANQCGLDSHNCLNKGDTYDKLHDGECK. Cystine bridges form between Cys23/Cys60, Cys27/Cys53, and Cys35/Cys75.

In terms of tissue distribution, expressed by the salivary gland.

The protein localises to the secreted. Functionally, vasodilator protein that inhibits vasoconstriction of isolated rat femoral artery induced by phenylephrine. Since platelet aggregation and vasoconstriction are key hemostatic responses, particularly in small wounds, this protein likely participates in the antihemostatic responses during blood feeding. Blocks L-type calcium channels (Cav1/CACNA1) in left ventricular myocytes isolated from rat hearts. This Tabanus yao (Horsefly) protein is Vasotab-TY3.